Reading from the N-terminus, the 148-residue chain is UPF0260 protein PC1_1943 (148 aa).

This sequence belongs to the UPF0260 family.

The protein is UPF0260 protein PC1_1943 of Pectobacterium carotovorum subsp. carotovorum (strain PC1).